The primary structure comprises 514 residues: ATP synthase subunit alpha (514 aa).

170-177 is an ATP binding site; the sequence is GDRQIGKT.

This sequence belongs to the ATPase alpha/beta chains family. In terms of assembly, F-type ATPases have 2 components, CF(1) - the catalytic core - and CF(0) - the membrane proton channel. CF(1) has five subunits: alpha(3), beta(3), gamma(1), delta(1), epsilon(1). CF(0) has three main subunits: a(1), b(2) and c(9-12). The alpha and beta chains form an alternating ring which encloses part of the gamma chain. CF(1) is attached to CF(0) by a central stalk formed by the gamma and epsilon chains, while a peripheral stalk is formed by the delta and b chains.

The protein localises to the cell inner membrane. The enzyme catalyses ATP + H2O + 4 H(+)(in) = ADP + phosphate + 5 H(+)(out). Functionally, produces ATP from ADP in the presence of a proton gradient across the membrane. The alpha chain is a regulatory subunit. This Stutzerimonas stutzeri (strain A1501) (Pseudomonas stutzeri) protein is ATP synthase subunit alpha.